The sequence spans 387 residues: Mannitol-1-phosphate 5-dehydrogenase (387 aa).

Residue 3–14 (ALHFGAGNIGRG) coordinates NAD(+).

It belongs to the mannitol dehydrogenase family.

The enzyme catalyses D-mannitol 1-phosphate + NAD(+) = beta-D-fructose 6-phosphate + NADH + H(+). This is Mannitol-1-phosphate 5-dehydrogenase from Yersinia pseudotuberculosis serotype O:1b (strain IP 31758).